The sequence spans 367 residues: Polygalacturonase (367 aa).

A signal peptide spans 1-19 (MSIRLIAVLSAASIAVTSA). Cys27 and Cys42 form a disulfide bridge. The N-linked (GlcNAc...) asparagine glycan is linked to Asn185. One copy of the PbH1 1 repeat lies at 187–208 (TDQLTIEDTVVKNQDDCIAVNQ). The active-site Proton donor is Asp201. Cysteines 203 and 219 form a disulfide. Residue His223 is part of the active site. Residues 240-261 (VRNVTFSNSVVRKSRNGIHIKT) form a PbH1 2 repeat. An N-linked (GlcNAc...) asparagine glycan is attached at Asn242. Cys334 and Cys339 are oxidised to a cystine. N-linked (GlcNAc...) asparagine glycans are attached at residues Asn343 and Asn357. Cys358 and Cys367 form a disulfide bridge.

This sequence belongs to the glycosyl hydrolase 28 family. As to expression, expressed in larval carcasses and gut, and adult gut.

Its subcellular location is the secreted. It is found in the cell wall. The catalysed reaction is (1,4-alpha-D-galacturonosyl)n+m + H2O = (1,4-alpha-D-galacturonosyl)n + (1,4-alpha-D-galacturonosyl)m.. This is Polygalacturonase from Phaedon cochleariae (Mustard beetle).